The chain runs to 188 residues: Putative pre-16S rRNA nuclease (188 aa).

The segment at L156–E188 is disordered. Residues S166–E188 are compositionally biased toward acidic residues.

The protein belongs to the YqgF nuclease family.

It is found in the cytoplasm. Its function is as follows. Could be a nuclease involved in processing of the 5'-end of pre-16S rRNA. In Rhodospirillum centenum (strain ATCC 51521 / SW), this protein is Putative pre-16S rRNA nuclease.